The chain runs to 213 residues: Dimethyl sulfoxide reductase transcriptional activator (213 aa).

In terms of domain architecture, HTH bat-type spans 155–206 (LTAKQREAALIAVHHGYYETPRRTELATLAEALGISKSALSQRLNAVEAKLA).

In terms of biological role, involved in activating dmsEABCD gene expression related to dimethyl sulfoxide (DMSO) reductase. Required for anaerobic respiration on dimethyl sulfoxide (DMSO). This chain is Dimethyl sulfoxide reductase transcriptional activator, found in Haloferax volcanii (strain ATCC 29605 / DSM 3757 / JCM 8879 / NBRC 14742 / NCIMB 2012 / VKM B-1768 / DS2) (Halobacterium volcanii).